We begin with the raw amino-acid sequence, 198 residues long: ATP-dependent Clp protease proteolytic subunit (198 aa).

Residue Ser98 is the Nucleophile of the active site. The active site involves His123.

It belongs to the peptidase S14 family. Fourteen ClpP subunits assemble into 2 heptameric rings which stack back to back to give a disk-like structure with a central cavity, resembling the structure of eukaryotic proteasomes.

The protein localises to the cytoplasm. The enzyme catalyses Hydrolysis of proteins to small peptides in the presence of ATP and magnesium. alpha-casein is the usual test substrate. In the absence of ATP, only oligopeptides shorter than five residues are hydrolyzed (such as succinyl-Leu-Tyr-|-NHMec, and Leu-Tyr-Leu-|-Tyr-Trp, in which cleavage of the -Tyr-|-Leu- and -Tyr-|-Trp bonds also occurs).. Its function is as follows. Cleaves peptides in various proteins in a process that requires ATP hydrolysis. Has a chymotrypsin-like activity. Plays a major role in the degradation of misfolded proteins. This is ATP-dependent Clp protease proteolytic subunit from Listeria monocytogenes serovar 1/2a (strain ATCC BAA-679 / EGD-e).